Reading from the N-terminus, the 433-residue chain is Alpha-(1-&gt;3)-arabinofuranosyltransferase (433 aa).

The next 10 membrane-spanning stretches (helical) occupy residues 118-138 (LFIS…LRMF), 140-160 (FTLT…TETV), 164-184 (LVFT…LRWL), 197-217 (LAIG…LLPL), 224-244 (ALVA…PLVS), 280-300 (WLIL…LWLL), 310-330 (LFWF…VMSL), 333-353 (GYYS…NSVI), 356-376 (WPAW…LFNW), and 385-405 (YLKI…VLYF).

This sequence belongs to the glycosyltransferase 87 family.

It localises to the cell membrane. It catalyses the reaction Adds an alpha-D-arabinofuranosyl group from trans,octacis-decaprenylphospho-beta-D-arabinofuranose at the 3-O-position of an alpha-(1-&gt;5)-arabinofuranan chain attached to a beta-(1-&gt;5)-galactofuranan chain.. It functions in the pathway cell wall biogenesis; cell wall polysaccharide biosynthesis. Functionally, involved in the biosynthesis of the arabinogalactan (AG) region of the mycolylarabinogalactan-peptidoglycan (mAGP) complex, an essential component of the mycobacterial cell wall. Catalyzes the addition of an arabinofuranosyl (Araf) residue from the sugar donor beta-D-arabinofuranosyl-1-monophosphoryldecaprenol (DPA) on the C-3 of an alpha-(1-&gt;5)-linked Araf from the arabinan backbone of AG. This chain is Alpha-(1-&gt;3)-arabinofuranosyltransferase (aftC), found in Mycobacterium tuberculosis (strain CDC 1551 / Oshkosh).